A 37-amino-acid chain; its full sequence is Large ribosomal subunit protein bL36 (37 aa).

It belongs to the bacterial ribosomal protein bL36 family.

The sequence is that of Large ribosomal subunit protein bL36 from Listeria innocua serovar 6a (strain ATCC BAA-680 / CLIP 11262).